A 794-amino-acid chain; its full sequence is DNA mismatch repair protein pms1 (794 aa).

Disordered regions lie at residues 351 to 384 and 409 to 442; these read SQIPDSSGDSTDQELPQSIPATESETSDDSSFSY and GASLAQVSKPLPERLQKDSMRRSSPLNEKVTASS. Over residues 352 to 371 the composition is skewed to polar residues; that stretch reads QIPDSSGDSTDQELPQSIPA. The span at 419-429 shows a compositional bias: basic and acidic residues; that stretch reads LPERLQKDSMR. The segment covering 430–442 has biased composition (polar residues); it reads RSSPLNEKVTASS.

This sequence belongs to the DNA mismatch repair MutL/HexB family.

Functionally, this protein is involved in the repair of mismatches in DNA. The protein is DNA mismatch repair protein pms1 (pms1) of Schizosaccharomyces pombe (strain 972 / ATCC 24843) (Fission yeast).